The following is a 158-amino-acid chain: Cystin-1 (158 aa).

A disordered region spans residues 1 to 146; the sequence is MGSGSSRSSR…AAISYDHSEE (146 aa). Gly-2 is lipidated: N-myristoyl glycine. 2 stretches are compositionally biased toward low complexity: residues 19–32 and 39–52; these read ESLP…ALEG and PVAA…AAEE. Positions 29–33 match the Ciliary targeting motif motif; that stretch reads ALEGG. Residues 65–75 show a composition bias toward basic and acidic residues; the sequence is DGRDETLRLLD.

Interacts (when myristoylated) with UNC119 and UNC119B; interaction is required for localization to cilium. Expressed at high levels in the kidney and pancreas. Moderate expression seen in the skeletal muscle, liver and heart. A weak expression seen in the brain, lung, uterus, prostate, testis, small intestine and colon.

It localises to the cell projection. Its subcellular location is the cilium membrane. The protein localises to the cytoplasm. The protein resides in the cytoskeleton. It is found in the cilium axoneme. This Homo sapiens (Human) protein is Cystin-1 (CYS1).